Here is a 393-residue protein sequence, read N- to C-terminus: S-adenosylmethionine synthase (393 aa).

Histidine 17 contacts ATP. Aspartate 19 provides a ligand contact to Mg(2+). Glutamate 45 contributes to the K(+) binding site. L-methionine contacts are provided by glutamate 58 and glutamine 106. A flexible loop region spans residues 106–116 (QSAHIAQGVDA). ATP contacts are provided by residues 171–173 (DAK), 237–238 (KF), aspartate 246, 252–253 (RK), alanine 269, and lysine 273. Aspartate 246 lines the L-methionine pocket. Lysine 277 is an L-methionine binding site.

This sequence belongs to the AdoMet synthase family. Homotetramer; dimer of dimers. It depends on Mg(2+) as a cofactor. K(+) is required as a cofactor.

The protein localises to the cytoplasm. The catalysed reaction is L-methionine + ATP + H2O = S-adenosyl-L-methionine + phosphate + diphosphate. It functions in the pathway amino-acid biosynthesis; S-adenosyl-L-methionine biosynthesis; S-adenosyl-L-methionine from L-methionine: step 1/1. In terms of biological role, catalyzes the formation of S-adenosylmethionine (AdoMet) from methionine and ATP. The overall synthetic reaction is composed of two sequential steps, AdoMet formation and the subsequent tripolyphosphate hydrolysis which occurs prior to release of AdoMet from the enzyme. The protein is S-adenosylmethionine synthase of Jannaschia sp. (strain CCS1).